Reading from the N-terminus, the 248-residue chain is Adenosylcobinamide-GDP ribazoletransferase (248 aa).

Helical transmembrane passes span 36–56 (FFLP…YLGL), 59–79 (FLPA…ITGG), 114–134 (GTIA…SLVL), 137–157 (YSIA…FLCL), 170–190 (IFIG…VLVL), and 199–219 (ATII…LLCL).

The protein belongs to the CobS family. The cofactor is Mg(2+).

The protein localises to the cell membrane. The enzyme catalyses alpha-ribazole + adenosylcob(III)inamide-GDP = adenosylcob(III)alamin + GMP + H(+). The catalysed reaction is alpha-ribazole 5'-phosphate + adenosylcob(III)inamide-GDP = adenosylcob(III)alamin 5'-phosphate + GMP + H(+). The protein operates within cofactor biosynthesis; adenosylcobalamin biosynthesis; adenosylcobalamin from cob(II)yrinate a,c-diamide: step 7/7. Functionally, joins adenosylcobinamide-GDP and alpha-ribazole to generate adenosylcobalamin (Ado-cobalamin). Also synthesizes adenosylcobalamin 5'-phosphate from adenosylcobinamide-GDP and alpha-ribazole 5'-phosphate. The protein is Adenosylcobinamide-GDP ribazoletransferase of Clostridium botulinum (strain Langeland / NCTC 10281 / Type F).